Reading from the N-terminus, the 985-residue chain is Alpha-glucosidase (985 aa).

Residues 1 to 25 (MVKLTHLLARAWLVPLAYGASQSLL) form the signal peptide. O-linked (Man) threonine glycosylation is present at T36. Residues N124, N143, N218, N347, and N422 are each glycosylated (N-linked (GlcNAc...) asparagine). D490 (nucleophile) is an active-site residue. E493 is a catalytic residue. 3 N-linked (GlcNAc...) asparagine glycosylation sites follow: N506, N534, and N537. Residues S545 and S550 are each glycosylated (O-linked (Man) serine). An O-linked (Man) threonine glycan is attached at T559. The O-linked (Man) serine glycan is linked to S560. A glycan (O-linked (Man) threonine) is linked at T561. O-linked (Man) serine glycosylation occurs at S562. O-linked (Man) threonine glycosylation occurs at T571. N-linked (GlcNAc...) asparagine glycans are attached at residues N601 and N623. The active-site Proton donor is D660. N835 and N881 each carry an N-linked (GlcNAc...) asparagine glycan. O-linked (Man) serine glycosylation is present at S895. N899, N957, and N970 each carry an N-linked (GlcNAc...) asparagine glycan.

This sequence belongs to the glycosyl hydrolase 31 family. Post-translationally, the O-linked saccharide is not identified, but is probably mannose.

The catalysed reaction is Hydrolysis of terminal, non-reducing (1-&gt;4)-linked alpha-D-glucose residues with release of alpha-D-glucose.. Its function is as follows. Hydrolyzes malto-oligosaccharides, but has a low activity toward soluble starch. The polypeptide is Alpha-glucosidase (aglA) (Aspergillus niger).